A 312-amino-acid chain; its full sequence is Porphobilinogen deaminase (312 aa).

C243 carries the S-(dipyrrolylmethanemethyl)cysteine modification.

Belongs to the HMBS family. In terms of assembly, monomer. The cofactor is dipyrromethane.

It catalyses the reaction 4 porphobilinogen + H2O = hydroxymethylbilane + 4 NH4(+). It functions in the pathway porphyrin-containing compound metabolism; protoporphyrin-IX biosynthesis; coproporphyrinogen-III from 5-aminolevulinate: step 2/4. Tetrapolymerization of the monopyrrole PBG into the hydroxymethylbilane pre-uroporphyrinogen in several discrete steps. The polypeptide is Porphobilinogen deaminase (Vibrio vulnificus (strain CMCP6)).